The sequence spans 256 residues: MNRIGVFGATGRVGKLLVELLGSDENAKLSSVFVRKELDFSMPPGALVTNDYKTFLEGCDVVIDFSLPDATAALLETAMQGHPKPLVIGTTGLDAHHFNLIHEASRQMPVLYATNMSLGVAILNKMVHTAAKALADFDIEIVEMHHRHKKDSPSGTALTLAESCAKARGVELDEVRVSGRNGNIGERKSEEIAVMSLRGGDIAGKHTVGFYSEGEYLEFVHTATSRMTFAKGALRAAKWLAKQESGLYGISDALGI.

Gly8 to Val13 lines the NAD(+) pocket. An NADP(+)-binding site is contributed by Lys36. Residues Gly89–Thr91 and Ala113–Met116 contribute to the NAD(+) site. The Proton donor/acceptor role is filled by His145. His146 contacts (S)-2,3,4,5-tetrahydrodipicolinate. Lys149 functions as the Proton donor in the catalytic mechanism. Gly155 to Thr156 lines the (S)-2,3,4,5-tetrahydrodipicolinate pocket.

The protein belongs to the DapB family.

It is found in the cytoplasm. It catalyses the reaction (S)-2,3,4,5-tetrahydrodipicolinate + NAD(+) + H2O = (2S,4S)-4-hydroxy-2,3,4,5-tetrahydrodipicolinate + NADH + H(+). It carries out the reaction (S)-2,3,4,5-tetrahydrodipicolinate + NADP(+) + H2O = (2S,4S)-4-hydroxy-2,3,4,5-tetrahydrodipicolinate + NADPH + H(+). Its pathway is amino-acid biosynthesis; L-lysine biosynthesis via DAP pathway; (S)-tetrahydrodipicolinate from L-aspartate: step 4/4. Its function is as follows. Catalyzes the conversion of 4-hydroxy-tetrahydrodipicolinate (HTPA) to tetrahydrodipicolinate. The chain is 4-hydroxy-tetrahydrodipicolinate reductase from Wolinella succinogenes (strain ATCC 29543 / DSM 1740 / CCUG 13145 / JCM 31913 / LMG 7466 / NCTC 11488 / FDC 602W) (Vibrio succinogenes).